A 59-amino-acid polypeptide reads, in one-letter code: UPF0337 protein PP_4561 (59 aa).

The segment covering 27–43 (TDNEKLRAEGKAQELKG) has biased composition (basic and acidic residues). The tract at residues 27–59 (TDNEKLRAEGKAQELKGEAQQVKGNVKDAVKKP) is disordered.

Belongs to the UPF0337 (CsbD) family.

This chain is UPF0337 protein PP_4561, found in Pseudomonas putida (strain ATCC 47054 / DSM 6125 / CFBP 8728 / NCIMB 11950 / KT2440).